Reading from the N-terminus, the 56-residue chain is Large ribosomal subunit protein bL32c (56 aa).

Residues 1 to 20 are compositionally biased toward basic residues; it reads MAAPKKRTSKSRKNMRKSTW. The interval 1–28 is disordered; it reads MAAPKKRTSKSRKNMRKSTWKRQAATQA.

This sequence belongs to the bacterial ribosomal protein bL32 family.

The protein localises to the plastid. Its subcellular location is the chloroplast. This is Large ribosomal subunit protein bL32c (rpl32) from Mesostigma viride (Green alga).